We begin with the raw amino-acid sequence, 500 residues long: Enolase (500 aa).

Residues H225 and E234 each coordinate substrate. E277 (proton donor) is an active-site residue. The Mg(2+) site is built by D312, E361, and D386. Positions 361 and 386 each coordinate substrate. The active-site Proton acceptor is the K411. Residues 438–441 (SHRS) and K462 contribute to the substrate site.

Belongs to the enolase family. As to quaternary structure, homodimer. The cofactor is Mg(2+).

The protein localises to the cytoplasm. It carries out the reaction (2R)-2-phosphoglycerate = phosphoenolpyruvate + H2O. It participates in carbohydrate degradation; glycolysis; pyruvate from D-glyceraldehyde 3-phosphate: step 4/5. Its function is as follows. Enzyme of the glycolytic pathway. Glycolysis is essential in glial cells but not in neurons; neurons rely on the citric acid cycle for their energy needs, and on lactate and alanine secreted into the hemolymph by glial cells to fuel it. In Drosophila melanogaster (Fruit fly), this protein is Enolase.